The chain runs to 88 residues: Small ribosomal subunit protein bS20 (88 aa).

2 disordered regions span residues 1-23 and 69-88; these read MANSPQARKRARQAENRRQHNAA and PNKAARHKSRLNTKIKAMAA. Residues 69 to 81 are compositionally biased toward basic residues; that stretch reads PNKAARHKSRLNT.

Belongs to the bacterial ribosomal protein bS20 family.

Binds directly to 16S ribosomal RNA. The chain is Small ribosomal subunit protein bS20 from Alcanivorax borkumensis (strain ATCC 700651 / DSM 11573 / NCIMB 13689 / SK2).